The following is a 401-amino-acid chain: S-adenosylmethionine synthase (401 aa).

ATP is bound at residue 137 to 142 (GQGSGD).

This sequence belongs to the AdoMet synthase 2 family. Mg(2+) is required as a cofactor.

The enzyme catalyses L-methionine + ATP + H2O = S-adenosyl-L-methionine + phosphate + diphosphate. Its pathway is amino-acid biosynthesis; S-adenosyl-L-methionine biosynthesis; S-adenosyl-L-methionine from L-methionine: step 1/1. In terms of biological role, catalyzes the formation of S-adenosylmethionine from methionine and ATP. The chain is S-adenosylmethionine synthase from Haloquadratum walsbyi (strain DSM 16790 / HBSQ001).